The chain runs to 1309 residues: Putative receptor-type tyrosine-protein phosphatase mosPTP-1 (1309 aa).

The N-terminal stretch at 1–36 (MNSAPRNAGAARSVDRRGFIAACGLLVLLVVRMLGA) is a signal peptide. Over 37–572 (ADATRIFDIE…RQVYDDYNLA (536 aa)) the chain is Extracellular. Asn-60, Asn-107, Asn-162, Asn-257, Asn-353, Asn-389, Asn-455, Asn-501, and Asn-513 each carry an N-linked (GlcNAc...) asparagine glycan. Fibronectin type-III domains follow at residues 147–244 (PPGR…TLRE), 249–347 (KPVT…DEGV), 350–449 (KPLN…SGPS), and 450–553 (APKV…LQLH). A helical transmembrane segment spans residues 573 to 593 (VLGGIVFSCFGLLLIVLSFLL). Over 594 to 1309 (WKKCFHAAYY…NHLNLDHNQS (716 aa)) the chain is Cytoplasmic. 2 Tyrosine-protein phosphatase domains span residues 656 to 921 (FSKE…LVEA) and 944 to 1196 (IDNQ…LSYM). Cys-862 functions as the Phosphocysteine intermediate in the catalytic mechanism. The tract at residues 1239–1269 (NSGDGGGNGNDGVPTGNGTNGGLPMSGGGTT) is disordered. Gly residues predominate over residues 1256-1268 (GTNGGLPMSGGGT).

Belongs to the protein-tyrosine phosphatase family. Receptor class subfamily. Interacts with C-type lectin mosGCTL-1; the interaction probably mediates the recruitment of West Nile virus particles in complex with C-type lectin mosGCTL-1 to the cell surface. Interacts with C-type lectin mosGCTL-7; the interaction probably mediates the recruitment of Japanese encephalitis virus particles in complex with C-type lectin mosGCTL-7 to the cell surface. In terms of tissue distribution, salivary gland (at protein level). Hemolymph. Low-level expression in midgut.

The protein localises to the cell membrane. It carries out the reaction O-phospho-L-tyrosyl-[protein] + H2O = L-tyrosyl-[protein] + phosphate. In terms of biological role, putative protein tyrosine-protein phosphatase. Its function is as follows. (Microbial infection) Facilitates West Nile virus infection in mosquitoes probably via recruiting West Nile virus particles in complex with C-type lectin mosGCTL-1 to the cell surface. Functionally, (Microbial infection) Facilitates Japanese encephalitis virus infection in mosquitoes probably via recruiting Japanese encephalitis virus particles in complex with C-type lectin mosGCTL-7 to the cell surface. In Aedes aegypti (Yellowfever mosquito), this protein is Putative receptor-type tyrosine-protein phosphatase mosPTP-1.